The following is a 504-amino-acid chain: Putative ribose/galactose/methyl galactoside import ATP-binding protein (504 aa).

2 ABC transporter domains span residues 5 to 242 and 252 to 497; these read ISVK…GRNL and TSAN…TRRE. 37–44 serves as a coordination point for ATP; the sequence is GENGAGKS.

Belongs to the ABC transporter superfamily. Carbohydrate importer 2 (CUT2) (TC 3.A.1.2) family.

It is found in the cell inner membrane. The enzyme catalyses D-ribose(out) + ATP + H2O = D-ribose(in) + ADP + phosphate + H(+). It carries out the reaction D-galactose(out) + ATP + H2O = D-galactose(in) + ADP + phosphate + H(+). Its function is as follows. Part of an ABC transporter complex involved in carbohydrate import. Could be involved in ribose, galactose and/or methyl galactoside import. Responsible for energy coupling to the transport system. This chain is Putative ribose/galactose/methyl galactoside import ATP-binding protein, found in Albidiferax ferrireducens (strain ATCC BAA-621 / DSM 15236 / T118) (Rhodoferax ferrireducens).